We begin with the raw amino-acid sequence, 325 residues long: Tartrate-resistant acid phosphatase type 5 (325 aa).

Positions methionine 1 to glycine 21 are cleaved as a signal peptide. The Fe cation site is built by aspartate 33, aspartate 71, tyrosine 74, and asparagine 110. Residues asparagine 116 and asparagine 147 are each glycosylated (N-linked (GlcNAc...) asparagine). An intrachain disulfide couples cysteine 161 to cysteine 219. 3 residues coordinate Fe cation: histidine 205, histidine 240, and histidine 242.

Belongs to the metallophosphoesterase superfamily. Purple acid phosphatase family. As to quaternary structure, exists either as monomer or, after proteolytic processing, as a dimer of two chains linked by disulfide bond(s). The cofactor is Fe cation.

It localises to the lysosome. It carries out the reaction a phosphate monoester + H2O = an alcohol + phosphate. Functionally, involved in osteopontin/bone sialoprotein dephosphorylation. Its expression seems to increase in certain pathological states such as Gaucher and Hodgkin diseases, the hairy cell, the B-cell, and the T-cell leukemias. The sequence is that of Tartrate-resistant acid phosphatase type 5 (ACP5) from Homo sapiens (Human).